A 1003-amino-acid polypeptide reads, in one-letter code: MATPGPRDIPLLPGSPRRLSPQAGSRGGQGPKHGQQCLKMPGPRAPGLQGGSNRDPGQPCGGESTRSSSVINNYLDANEPVSLEARLSRMHFHDSQRKVDYVLAYHYRKRGVHLAQGFPGHSLAIVSNGETGKEPHAGGPGDIELGPLDALEEERKEQREEFEHNLMEAGLELEKDLENKSQGSIFVRIHAPWQVLAREAEFLKIKVPTKKEMYEIKAGGSIAKKFSAALQKLSSHLQPRVPEHSNNKMKNLSYPFSREKMYLYNIQEKDTFFDNATRSRIVHEILKRTACSRANNTMGINSLIANNIYEAAYPLHDGEYDSPEDDMNDRKLLYQEWARYGVFYKFQPIDLIRKYFGEKIGLYFAWLGLYTSFLIPSSVIGVIVFLYGCATIEEDIPSREMCDQQNAFTMCPLCDKSCDYWNLSSACGTAQASHLFDNPATVFFSIFMALWATMFLENWKRLQMRLGYFWDLTGIEEEEERAQEHSRPEYETKVREKMLKESNQSAVQKLETNTTECGDEDDEDKLTWKDRFPGYLMNFASILFMIALTFSIVFGVIVYRITTAAALSLNKATRSNVRVTVTATAVIINLVVILILDEIYGAVAKWLTKIEVPKTEQTFEERLILKAFLLKFVNAYSPIFYVAFFKGRFVGRPGSYVYVFDGYRMEECAPGGCLMELCIQLSIIMLGKQLIQNNIFEIGVPKLKKLFRKLKDETEAGETDSAHSKHPEQWDLDYSLEPYTGLTPEYMEMIIQFGFVTLFVASFPLAPVFALLNNVIEVRLDAKKFVTELRRPDAVRTKDIGIWFDILSGIGKFSVISNAFVIAITSDFIPRLVYQYSYSHNGTLHGFVNHTLSFFNVSQLKEGTQPENSQFDQEVQFCRFKDYREPPWAPNPYEFSKQYWFILSARLAFVIIFQNLVMFLSVLVDWMIPDIPTDISDQIKKEKSLLVDFFLKEEHEKLKLMDEPALRSPGGGDRSRSRAASSAPSGQSQLGSMMSSGSQHTNV.

Positions 1 to 68 (MATPGPRDIP…PCGGESTRSS (68 aa)) are disordered. Topologically, residues 1–365 (MATPGPRDIP…FGEKIGLYFA (365 aa)) are cytoplasmic. Residues 10–21 (PLLPGSPRRLSP) are compositionally biased toward low complexity. The chain crosses the membrane as a helical span at residues 366-386 (WLGLYTSFLIPSSVIGVIVFL). Residues 387 to 434 (YGCATIEEDIPSREMCDQQNAFTMCPLCDKSCDYWNLSSACGTAQASH) are Extracellular-facing. Asparagine 422 carries an N-linked (GlcNAc...) asparagine glycan. The helical transmembrane segment at 435 to 455 (LFDNPATVFFSIFMALWATMF) threads the bilayer. At 456 to 538 (LENWKRLQMR…KDRFPGYLMN (83 aa)) the chain is on the cytoplasmic side. A helical membrane pass occupies residues 539-559 (FASILFMIALTFSIVFGVIVY). Over 560 to 582 (RITTAAALSLNKATRSNVRVTVT) the chain is Extracellular. Residues 583–603 (ATAVIINLVVILILDEIYGAV) form a helical membrane-spanning segment. The Cytoplasmic segment spans residues 604–623 (AKWLTKIEVPKTEQTFEERL). A helical membrane pass occupies residues 624 to 644 (ILKAFLLKFVNAYSPIFYVAF). Residues 645-748 (FKGRFVGRPG…YTGLTPEYME (104 aa)) are Extracellular-facing. A helical membrane pass occupies residues 749-769 (MIIQFGFVTLFVASFPLAPVF). At 770–801 (ALLNNVIEVRLDAKKFVTELRRPDAVRTKDIG) the chain is on the cytoplasmic side. A helical transmembrane segment spans residues 802-822 (IWFDILSGIGKFSVISNAFVI). At 823–907 (AITSDFIPRL…QYWFILSARL (85 aa)) the chain is on the extracellular side. Residues asparagine 841, asparagine 849, and asparagine 856 are each glycosylated (N-linked (GlcNAc...) asparagine). Residues 908 to 928 (AFVIIFQNLVMFLSVLVDWMI) traverse the membrane as a helical segment. The Cytoplasmic segment spans residues 929–1003 (PDIPTDISDQ…MSSGSQHTNV (75 aa)). The tract at residues 961-1003 (MDEPALRSPGGGDRSRSRAASSAPSGQSQLGSMMSSGSQHTNV) is disordered. Residues 978-1003 (RAASSAPSGQSQLGSMMSSGSQHTNV) show a composition bias toward low complexity. Residues 1001–1003 (TNV) carry the DLG4 binding (PDZ) motif.

The protein belongs to the anoctamin family. In terms of assembly, homodimer. Component of a presynaptic protein complex recruited to specialized plasma membrane domains of photoreceptors. Interacts with DLG4 by its C-terminal region. As to expression, retina, especially in the photoreceptor synaptic terminals.

It is found in the cell membrane. The enzyme catalyses chloride(in) = chloride(out). Its activity is regulated as follows. Channel activity is repressed by chloride inhibitors; strongly by niflumic acid (NFA), partially by flufenamic acid (FFA), and only slightly by meclofenamic acid (MFA), 5-Nitro-2-(3-phenylpropylamino)benzoic acid (NPPB), 4-acetamido-4'-isothiocyanato-stilben-2,2'-disulfonate (SITS), and 4,4'-diisothiocyanatostilbene-2,2'-disulfonic acid (DIDS). Functionally, calcium-activated chloride channel (CaCC) which may play a role in olfactory signal transduction. Odorant molecules bind to odor-sensing receptors (OSRs), leading to an increase in calcium entry that activates CaCC current which amplifies the depolarization of the OSR cells, ANO2 seems to be the underlying chloride channel involved in this process. May mediate light perception amplification in retina. The chain is Anoctamin-2 (ANO2) from Homo sapiens (Human).